A 505-amino-acid chain; its full sequence is Histidine ammonia-lyase (505 aa).

Residues 141 to 143 constitute a cross-link (5-imidazolinone (Ala-Gly)); sequence ASG. Serine 142 carries the 2,3-didehydroalanine (Ser) modification.

The protein belongs to the PAL/histidase family. Contains an active site 4-methylidene-imidazol-5-one (MIO), which is formed autocatalytically by cyclization and dehydration of residues Ala-Ser-Gly.

It is found in the cytoplasm. The catalysed reaction is L-histidine = trans-urocanate + NH4(+). It participates in amino-acid degradation; L-histidine degradation into L-glutamate; N-formimidoyl-L-glutamate from L-histidine: step 1/3. The chain is Histidine ammonia-lyase from Bacillus thuringiensis (strain Al Hakam).